Consider the following 143-residue polypeptide: MLSPKNTKYRKPHLGRLKGRASRCNQIAFGDYALQAKERVWLTSRQIEATRRTLTRYMKRGGKLWIRVFPDRAVTAKPAETRMGSGKGAPEYWAAPVRPDQILFELKGVPFQVAKEAIHMASYKLPIRVKMLCRNNNENNNSV.

This sequence belongs to the universal ribosomal protein uL16 family. As to quaternary structure, part of the 50S ribosomal subunit.

The protein resides in the plastid. Its subcellular location is the chloroplast. This is Large ribosomal subunit protein uL16c from Cyanidioschyzon merolae (strain NIES-3377 / 10D) (Unicellular red alga).